A 186-amino-acid polypeptide reads, in one-letter code: MLVILKENIRTLGKLGEIVKVKPGYARNFLFPQRKAVKATKESIAKLEEQRSFLEEENIRKLNLASELAASFAGKFVILVKQASEDGKIFGSVTTREVARSLSQEYEVDHRKISFNGVKIRNLGEYQASIEFHSEIVVQVAVHVVRSETDAHELRQVKSQSQKSQQQEAKQNEVGEATDSDKADQK.

The tract at residues 153-186 (ELRQVKSQSQKSQQQEAKQNEVGEATDSDKADQK) is disordered. The span at 157 to 169 (VKSQSQKSQQQEA) shows a compositional bias: low complexity.

It belongs to the bacterial ribosomal protein bL9 family.

Functionally, binds to the 23S rRNA. This chain is Large ribosomal subunit protein bL9, found in Wolbachia sp. subsp. Brugia malayi (strain TRS).